The chain runs to 179 residues: Large ribosomal subunit protein uL5 (179 aa).

Belongs to the universal ribosomal protein uL5 family. As to quaternary structure, part of the 50S ribosomal subunit; part of the 5S rRNA/L5/L18/L25 subcomplex. Contacts the 5S rRNA and the P site tRNA. Forms a bridge to the 30S subunit in the 70S ribosome.

Its function is as follows. This is one of the proteins that bind and probably mediate the attachment of the 5S RNA into the large ribosomal subunit, where it forms part of the central protuberance. In the 70S ribosome it contacts protein S13 of the 30S subunit (bridge B1b), connecting the 2 subunits; this bridge is implicated in subunit movement. Contacts the P site tRNA; the 5S rRNA and some of its associated proteins might help stabilize positioning of ribosome-bound tRNAs. This is Large ribosomal subunit protein uL5 from Xylella fastidiosa (strain 9a5c).